The chain runs to 385 residues: Protein pelota homolog (385 aa).

Residue Lys162 forms a Glycyl lysine isopeptide (Lys-Gly) (interchain with G-Cter in SUMO2) linkage. Ser374, Ser380, Ser381, and Ser382 each carry phosphoserine.

It belongs to the eukaryotic release factor 1 family. Pelota subfamily. Component of the Pelota-HBS1L complex, also named Dom34-Hbs1 complex, composed of PELO and HBS1L. Interacts with PINK1. Interacts with ABCE1. Interacts with CNOT4. The cofactor is a divalent metal cation.

The protein localises to the cytoplasm. Component of the Pelota-HBS1L complex, a complex that recognizes stalled ribosomes and triggers the No-Go Decay (NGD) pathway. In the Pelota-HBS1L complex, PELO recognizes ribosomes stalled at the 3' end of an mRNA and engages stalled ribosomes by destabilizing mRNA in the mRNA channel. Following mRNA extraction from stalled ribosomes by the SKI complex, the Pelota-HBS1L complex promotes recruitment of ABCE1, which drives the disassembly of stalled ribosomes, followed by degradation of damaged mRNAs as part of the NGD pathway. As part of the PINK1-regulated signaling, upon mitochondrial damage is recruited to the ribosome/mRNA-ribonucleoprotein complex associated to mitochondrial outer membrane thereby enabling the recruitment of autophagy receptors and induction of mitophagy. The chain is Protein pelota homolog (Pelo) from Rattus norvegicus (Rat).